Consider the following 680-residue polypeptide: DNA-directed RNA polymerase subunit beta' (680 aa).

Cys-69, Cys-71, Cys-87, and Cys-90 together coordinate Zn(2+). Mg(2+) contacts are provided by Asp-489, Asp-491, and Asp-493.

It belongs to the RNA polymerase beta' chain family. RpoC1 subfamily. In plastids the minimal PEP RNA polymerase catalytic core is composed of four subunits: alpha, beta, beta', and beta''. When a (nuclear-encoded) sigma factor is associated with the core the holoenzyme is formed, which can initiate transcription. Mg(2+) is required as a cofactor. The cofactor is Zn(2+).

The protein localises to the plastid. It is found in the chloroplast. The enzyme catalyses RNA(n) + a ribonucleoside 5'-triphosphate = RNA(n+1) + diphosphate. Its function is as follows. DNA-dependent RNA polymerase catalyzes the transcription of DNA into RNA using the four ribonucleoside triphosphates as substrates. In Arabis hirsuta (Hairy rock-cress), this protein is DNA-directed RNA polymerase subunit beta'.